The primary structure comprises 514 residues: Beta-glucosidase 21 (514 aa).

The first 25 residues, 1–25 (MERPLHLLLVFLSSPWLLLLQGVSS), serve as a signal peptide directing secretion. Residues Gln-47 and His-147 each contribute to the a beta-D-glucoside site. The Proton donor role is filled by Glu-193. An intrachain disulfide couples Cys-212 to Cys-220. 2 N-linked (GlcNAc...) asparagine glycosylation sites follow: Asn-219 and Asn-224. A beta-D-glucoside is bound by residues Tyr-336 and Glu-406. The active-site Nucleophile is the Glu-406. Asn-407 carries N-linked (GlcNAc...) asparagine glycosylation. A beta-D-glucoside is bound by residues Trp-448 and Phe-465. N-linked (GlcNAc...) asparagine glycosylation is present at Asn-494.

The protein belongs to the glycosyl hydrolase 1 family.

The enzyme catalyses Hydrolysis of terminal, non-reducing beta-D-glucosyl residues with release of beta-D-glucose.. The protein is Beta-glucosidase 21 (BGLU21) of Oryza sativa subsp. japonica (Rice).